Reading from the N-terminus, the 203-residue chain is Peptidoglycan-recognition protein SA (203 aa).

A signal peptide spans 1–26 (MQPVRFGSPWIMAIGLVLLLLAFVSA). Intrachain disulfides connect Cys37–Cys160 and Cys74–Cys80. The N-acetylmuramoyl-L-alanine amidase domain occupies 59–186 (RPIRYVVIHH…SQVISTQSPG (128 aa)). Peptidoglycan binding regions lie at residues 87–90 (MQAY) and 97–102 (FNDISY).

This sequence belongs to the N-acetylmuramoyl-L-alanine amidase 2 family. In larvae, it is expressed in fat body. Also expressed in uninduced hemocytes and mbn-2 cells.

It localises to the secreted. The catalysed reaction is N-acetyl-D-glucosaminyl-N-acetylmuramoyl-L-alanyl-meso-2,6-diaminoheptanedioyl-D-alanine + H2O = N-acetyl-D-glucosaminyl-N-acetylmuramoyl-L-alanyl-meso-2,6-diaminoheptanedioate + D-alanine. Its function is as follows. Peptidoglycan-recognition protein that plays a key role in innate immunity by binding to peptidoglycans (PGN) of Gram-positive bacteria and activating the Toll pathway upstream of spz activating enzyme SPE. Has no activity against Gram-negative bacteria and fungi. Shows some partial redundancy with PRPGP-SD in Gram-positive bacteria recognition. May act by forming a complex with GNBP1 that activates the proteolytic cleavage of Spatzle and the subsequent activation of Toll pathway. Binds to diaminopimelic acid-type tetrapeptide PGN (DAP-type PGN) and lysine-type PGN (Lys-type PGN). Has some L,D-carboxypeptidase activity for DAP-type PGN, which are specific to prokaryotes, but not for Lys-type PGN. This is Peptidoglycan-recognition protein SA (PGRP-SA) from Drosophila melanogaster (Fruit fly).